The sequence spans 319 residues: MSEILNLKDLKVYYPIRSGFFNRVTDNVLAVDGVDLTIHEGETVGLVGESGSGKSTIGKTIVGLEQMTSGQLIYKGQDVSKKKIRNQLKYNKDVQMIFQDAFSSLNPRKTIYDIIAEPIRNFEKIDANTENKRIHELLDIVGLPKQALEQYPFQFSGGQQQRIGIARAVATNPKLIVADEPVSALDLSVQAQVLNFMKLIQKDLGIAFLFISHDLGVVRHMTDNIAVMHNGRIVEKGTRRDIFDEPQHIYTKRLLSAIPSIDVTRRAENRKNRLKVEQDFEDKKANFYDKDGHALPLKKLSESHWAALPKGGENVESNY.

The ABC transporter domain occupies leucine 5–leucine 255. ATP is bound at residue glycine 48–serine 55.

This sequence belongs to the ABC transporter superfamily. The complex is composed of two ATP-binding proteins (OppD and OppF), two transmembrane proteins (OppB and OppC) and a solute-binding protein (OppA).

It localises to the cell membrane. The enzyme catalyses a [peptide](out) + ATP + H2O = a [peptide](in) + ADP + phosphate + H(+). Part of the ABC transporter complex OppABCDF involved in the uptake of oligopeptides. Probably responsible for energy coupling to the transport system. Essential for uptake of peptides larger than three amino acids and for growth in milk. The protein is Oligopeptide transport ATP-binding protein OppF (oppF) of Lactococcus lactis subsp. lactis (strain IL1403) (Streptococcus lactis).